We begin with the raw amino-acid sequence, 288 residues long: GDSL esterase/lipase At3g43550 (288 aa).

An N-terminal signal peptide occupies residues 1-19 (MKLQIIWLALVLIAVETYA). N-linked (GlcNAc...) asparagine glycosylation occurs at asparagine 25. Residue serine 37 is the Nucleophile of the active site.

Belongs to the 'GDSL' lipolytic enzyme family.

It localises to the secreted. This Arabidopsis thaliana (Mouse-ear cress) protein is GDSL esterase/lipase At3g43550.